A 151-amino-acid polypeptide reads, in one-letter code: Myosin light polypeptide 6 (151 aa).

At Cys-2 the chain carries N-acetylcysteine. EF-hand domains lie at 7–42 (EQTA…LGQN), 84–119 (GCFE…LGEK), and 119–151 (KMTE…VLSG).

As to quaternary structure, myosin is a hexamer of 2 heavy chains and 4 light chains.

Functionally, regulatory light chain of myosin. Does not bind calcium. The polypeptide is Myosin light polypeptide 6 (MYL6) (Gallus gallus (Chicken)).